The sequence spans 117 residues: Large ribosomal subunit protein bL20c (117 aa).

Belongs to the bacterial ribosomal protein bL20 family.

Its subcellular location is the plastid. In terms of biological role, binds directly to 23S ribosomal RNA and is necessary for the in vitro assembly process of the 50S ribosomal subunit. It is not involved in the protein synthesizing functions of that subunit. This chain is Large ribosomal subunit protein bL20c (rpl20), found in Euglena longa (Euglenophycean alga).